We begin with the raw amino-acid sequence, 1007 residues long: Retinoblastoma-related protein (1007 aa).

The tract at residues T406–L604 is domain A. The segment at T406–P856 is pocket. Residues I605–E725 form a spacer region. A disordered region spans residues P644–K665. Residues T726–P856 are domain B.

Belongs to the retinoblastoma protein (RB) family.

Its subcellular location is the nucleus. Its function is as follows. Regulator of biological processes that recruits a histone deacetylase to control gene transcription. May play a role in the entry into mitosis, negatively regulating the cell proliferation. Formation of stable complexes with geminiviridae replication-associated proteins may create a cellular environment which favors viral DNA replication. This Vitis vinifera (Grape) protein is Retinoblastoma-related protein (RBR).